Consider the following 282-residue polypeptide: MRVSTLVLSTSIIPIATALNISPFHNIEKKDILADAASAAGGAAAAVTSGAVGAANTVASGAAGAADTATSGAAGIANTVASGAAGAADTATSGAAGAAKTATSGAAGAADTATSGAVGAAKTATSGAAGAAKTATSGAAGAASGAETAAGAAASGAETAAAGQETSGAGSLVGGSGSSNSTSPSGGSGSSNGTSSGSGSGSGAGVGSGSGSGSGSRGSITGNSVATGASSGPAGLGISSSISQSTTRQLQTSGSSNSSSSAGMGNVVVGMNAVALAALVLI.

Residues 1–18 (MRVSTLVLSTSIIPIATA) form the signal peptide. The segment at 163-264 (GQETSGAGSL…SSNSSSSAGM (102 aa)) is disordered. N-linked (GlcNAc...) asparagine glycans are attached at residues asparagine 180, asparagine 192, and asparagine 257. Positions 186 to 216 (GGSGSSNGTSSGSGSGSGAGVGSGSGSGSGS) are enriched in gly residues. Residues 236–264 (LGISSSISQSTTRQLQTSGSSNSSSSAGM) are compositionally biased toward low complexity. Serine 259 carries the GPI-anchor amidated serine lipid modification. A propeptide spans 260 to 282 (SSAGMGNVVVGMNAVALAALVLI) (removed in mature form).

The protein resides in the cell membrane. Its function is as follows. Probable cell surface protein involved in the process of adhesion and early events of invasion. The protein is Predicted GPI-anchored protein 23 (PGA23) of Candida albicans (strain SC5314 / ATCC MYA-2876) (Yeast).